The following is an 841-amino-acid chain: DNA mismatch repair protein MutS (841 aa).

596–603 lines the ATP pocket; it reads GPNMSGKS.

It belongs to the DNA mismatch repair MutS family.

Functionally, this protein is involved in the repair of mismatches in DNA. It is possible that it carries out the mismatch recognition step. This protein has a weak ATPase activity. The sequence is that of DNA mismatch repair protein MutS from Acholeplasma laidlawii (strain PG-8A).